Consider the following 363-residue polypeptide: Carbamoyl phosphate synthase small chain (363 aa).

Residues Met-1 to Arg-172 form a CPSase region. Positions 46, 220, and 222 each coordinate L-glutamine. Residues Arg-172–Gly-359 form the Glutamine amidotransferase type-1 domain. Cys-247 (nucleophile) is an active-site residue. L-glutamine-binding residues include Leu-248, Gln-251, Asn-289, Gly-291, and Tyr-292. Residues His-332 and Glu-334 contribute to the active site.

This sequence belongs to the CarA family. Composed of two chains; the small (or glutamine) chain promotes the hydrolysis of glutamine to ammonia, which is used by the large (or ammonia) chain to synthesize carbamoyl phosphate. Tetramer of heterodimers (alpha,beta)4.

It catalyses the reaction hydrogencarbonate + L-glutamine + 2 ATP + H2O = carbamoyl phosphate + L-glutamate + 2 ADP + phosphate + 2 H(+). It carries out the reaction L-glutamine + H2O = L-glutamate + NH4(+). It participates in amino-acid biosynthesis; L-arginine biosynthesis; carbamoyl phosphate from bicarbonate: step 1/1. It functions in the pathway pyrimidine metabolism; UMP biosynthesis via de novo pathway; (S)-dihydroorotate from bicarbonate: step 1/3. Its function is as follows. Small subunit of the glutamine-dependent carbamoyl phosphate synthetase (CPSase). CPSase catalyzes the formation of carbamoyl phosphate from the ammonia moiety of glutamine, carbonate, and phosphate donated by ATP, constituting the first step of 2 biosynthetic pathways, one leading to arginine and/or urea and the other to pyrimidine nucleotides. The small subunit (glutamine amidotransferase) binds and cleaves glutamine to supply the large subunit with the substrate ammonia. This Listeria monocytogenes serovar 1/2a (strain ATCC BAA-679 / EGD-e) protein is Carbamoyl phosphate synthase small chain.